The primary structure comprises 148 residues: Lysozyme C-1 (148 aa).

An N-terminal signal peptide occupies residues 1–18; that stretch reads MKALLTLGLLLLSVTAQA. Residues 19 to 148 form the C-type lysozyme domain; it reads KVYNRCELAR…LSQYIRNCGV (130 aa). 4 disulfides stabilise this stretch: C24–C146, C48–C134, C83–C99, and C95–C113. Catalysis depends on residues E53 and D71.

The protein belongs to the glycosyl hydrolase 22 family. In terms of assembly, monomer. In terms of tissue distribution, expressed strongly only in small intestine.

The protein resides in the secreted. It catalyses the reaction Hydrolysis of (1-&gt;4)-beta-linkages between N-acetylmuramic acid and N-acetyl-D-glucosamine residues in a peptidoglycan and between N-acetyl-D-glucosamine residues in chitodextrins.. In terms of biological role, lysozymes have primarily a bacteriolytic function; those in tissues and body fluids are associated with the monocyte-macrophage system and enhance the activity of immunoagents. Lyz1 is active against a range of Gram-positive and Gram-negative bacteria. Less effective than Lyz2 in killing Gram-negative bacteria. Lyz1 and Lyz2 are equally effective in killing Gram-positive bacteria. This chain is Lysozyme C-1 (Lyz1), found in Mus musculus (Mouse).